Reading from the N-terminus, the 189-residue chain is ECF RNA polymerase sigma-E factor (189 aa).

The interval 1 to 153 (MAEQLTDQAL…TAITLRELEG (153 aa)) is binds RNAP core. Residues 25–92 (LVSRYQNKVA…KNYLTAQGRR (68 aa)) are sigma-70 factor domain-2. A Polymerase core binding motif is present at residues 48-61 (DVVQESFIKAYRSI). The tract at residues 129–180 (RIVFDTIHNLPEDLKTAITLRELEGLSYEDIAEIMDCPVGTVRSRIFRAREM) is sigma-70 factor domain-4. Positions 156–175 (YEDIAEIMDCPVGTVRSRIF) form a DNA-binding region, H-T-H motif.

This sequence belongs to the sigma-70 factor family. ECF subfamily. As to quaternary structure, interacts transiently with the RNAP catalytic core formed by RpoA, RpoB, RpoC and RpoZ (2 alpha, 1 beta, 1 beta' and 1 omega subunit) to form the RNAP holoenzyme that can initiate transcription. Interacts 1:1 with anti-sigma-E factor RseA which prevents binding to RNAP catalytic core.

The protein localises to the cytoplasm. With respect to regulation, ECF sigma-E is held in an inactive form by its cognate anti-sigma factor (RseA) until released by regulated intramembrane proteolysis (RIP). RIP occurs when an extracytoplasmic signal (periplasmic stress and excess LPS) triggers a concerted proteolytic cascade to transmit information and elicit cellular responses. The anti-sigma factor RseA is an inner membrane protein, binding sigma-E in the cytoplasm and RseB in the periplasm. RseA is first cut extracytoplasmically (site-1 protease, S1P, by DegS), then within the membrane itself (site-2 protease, S2P, by RseP), while cytoplasmic proteases (predominantly ClpX-ClpP) finish degrading the regulatory protein, liberating sigma-E. Degradation of RseA requires 2 signals to activate DegS; an outer membrane protein (OMP) signal activates DegS, while an LPS signal causes release of RseB from RseA, freeing RseA to be cleaved. Its function is as follows. Sigma factors are initiation factors that promote the attachment of RNA polymerase (RNAP) to specific initiation sites and are then released. Extracytoplasmic function (ECF) sigma-E controls the envelope stress response, responding to periplasmic protein stress, increased levels of periplasmic lipopolysaccharide (LPS) as well as heat shock and oxidative stress; it controls protein processing in the extracytoplasmic compartment. The polypeptide is ECF RNA polymerase sigma-E factor (rpoE) (Haemophilus influenzae (strain ATCC 51907 / DSM 11121 / KW20 / Rd)).